Reading from the N-terminus, the 66-residue chain is Nigrocin-2GRa (66 aa).

The signal sequence occupies residues 1–22 (MFTLKKSQLLLFFPGTINLSLC). The propeptide occupies 23–45 (QDETNAEEERRDEEVAKMEEIKR). A disulfide bridge connects residues cysteine 60 and cysteine 66.

Expressed by the skin glands.

The protein localises to the secreted. Its function is as follows. Antimicrobial peptide active at least against the Gram-positive bacterium S.aureus but with otherwise unclear activity spectrum. Lacks hemolytic activity against rabbit or human erythrocytes. The chain is Nigrocin-2GRa from Odorrana grahami (Yunnanfu frog).